A 434-amino-acid chain; its full sequence is Alpha-enolase (434 aa).

Ser-2 carries the N-acetylserine modification. The residue at position 5 (Lys-5) is an N6-acetyllysine. Mg(2+) is bound at residue Ser-40. Tyr-44 carries the post-translational modification Phosphotyrosine. Position 60 is an N6-acetyllysine; alternate (Lys-60). The residue at position 60 (Lys-60) is an N6-succinyllysine; alternate. Residues Lys-64 and Lys-71 each carry the N6-acetyllysine modification. The residue at position 89 (Lys-89) is an N6-acetyllysine; alternate. The residue at position 89 (Lys-89) is an N6-succinyllysine; alternate. N6-acetyllysine is present on residues Lys-92 and Lys-126. Substrate contacts are provided by His-158 and Glu-167. N6-acetyllysine occurs at positions 193 and 199. Lys-202 is subject to N6-acetyllysine; alternate. Lys-202 participates in a covalent cross-link: Glycyl lysine isopeptide (Lys-Gly) (interchain with G-Cter in SUMO2); alternate. Residue Glu-210 is the Proton donor of the active site. 2 positions are modified to N6-acetyllysine; alternate: Lys-228 and Lys-233. N6-succinyllysine; alternate is present on Lys-228. Lys-228 carries the N6-(2-hydroxyisobutyryl)lysine; alternate modification. At Lys-233 the chain carries N6-malonyllysine; alternate. Residue Asp-245 participates in Mg(2+) binding. Ser-254 is subject to Phosphoserine. The residue at position 256 (Lys-256) is an N6-acetyllysine. At Ser-263 the chain carries Phosphoserine. Lys-281 bears the N6-acetyllysine; alternate mark. N6-(2-hydroxyisobutyryl)lysine; alternate is present on Lys-281. Tyr-287 carries the post-translational modification Phosphotyrosine. At Ser-291 the chain carries Phosphoserine. 2 residues coordinate Mg(2+): Glu-293 and Asp-318. Residues Glu-293 and Asp-318 each coordinate substrate. N6-acetyllysine is present on residues Lys-335 and Lys-343. The active-site Proton acceptor is the Lys-343. Substrate is bound by residues 370 to 373 (SHRS) and Lys-394. Residues 405-434 (AKYNQILRIEEELGSKAKFAGRSFRNPLAK) are required for interaction with PLG. Lys-406 is subject to N6-acetyllysine. Lys-420 bears the N6-acetyllysine; alternate mark. Lys-420 is subject to N6-succinyllysine; alternate. Position 420 is an N6-malonyllysine; alternate (Lys-420).

It belongs to the enolase family. In terms of assembly, mammalian enolase is composed of 3 isozyme subunits, alpha, beta and gamma, which can form homodimers or heterodimers which are cell-type and development-specific. ENO1 interacts with PLG in the neuronal plasma membrane and promotes its activation. The C-terminal lysine is required for this binding. Interacts with ENO4 and PGAM2. Interacts with CMTM6. Requires Mg(2+) as cofactor. Post-translationally, ISGylated. In terms of processing, lysine 2-hydroxyisobutyrylation (Khib) by p300/EP300 activates the phosphopyruvate hydratase activity. In terms of tissue distribution, the alpha/alpha homodimer is expressed in embryo and in most adult tissues. The alpha/beta heterodimer and the beta/beta homodimer are found in striated muscle, and the alpha/gamma heterodimer and the gamma/gamma homodimer in neurons.

It localises to the cytoplasm. Its subcellular location is the cell membrane. The enzyme catalyses (2R)-2-phosphoglycerate = phosphoenolpyruvate + H2O. It participates in carbohydrate degradation; glycolysis; pyruvate from D-glyceraldehyde 3-phosphate: step 4/5. Functionally, glycolytic enzyme the catalyzes the conversion of 2-phosphoglycerate to phosphoenolpyruvate. In addition to glycolysis, involved in various processes such as growth control, hypoxia tolerance and allergic responses. May also function in the intravascular and pericellular fibrinolytic system due to its ability to serve as a receptor and activator of plasminogen on the cell surface of several cell-types such as leukocytes and neurons. Stimulates immunoglobulin production. The protein is Alpha-enolase (ENO1) of Bos taurus (Bovine).